We begin with the raw amino-acid sequence, 227 residues long: UPF0173 metal-dependent hydrolase YtkL (227 aa).

This sequence belongs to the UPF0173 family.

This is UPF0173 metal-dependent hydrolase YtkL (ytkL) from Bacillus subtilis (strain 168).